The primary structure comprises 1169 residues: Chromosome partition protein Smc (1169 aa).

32 to 39 contacts ATP; that stretch reads PNGSGKSN. Residues 166 to 507 adopt a coiled-coil conformation; sequence DEISGIAEFD…RIKALKEMEE (342 aa). Residues 523-636 form the SMC hinge domain; it reads PGIIDIVGNL…ENIDIAKELA (114 aa). The stretch at 676–1030 forms a coiled coil; the sequence is SKLNKIADEI…NKKKEVFMEV (355 aa).

Belongs to the SMC family. In terms of assembly, homodimer.

Its subcellular location is the cytoplasm. Required for chromosome condensation and partitioning. The polypeptide is Chromosome partition protein Smc (Methanocaldococcus jannaschii (strain ATCC 43067 / DSM 2661 / JAL-1 / JCM 10045 / NBRC 100440) (Methanococcus jannaschii)).